A 315-amino-acid polypeptide reads, in one-letter code: MPVKVCLIFAGGTGMNVATKLVDLGEAVHCFDTCDKNVVDVHRSVNVTLTKGTRGAGGNRKVILPLVRPQIPALMDTIPEADFYIVCYSLGGGSGSVLGPLITGQLADRKASFVSFVVGAMESTDNLGNDIDTMKTLEAIAVNKHLPIVVNYVPNTQGRSYESINDEIAEKIRKVVLLVNQNHGRLDVHDVANWVRFTDKHNYLIPQVCELHIETTRKDAENVPEAISQLSLYLDPSKEVAFGTPIYRKVGIMKVDDLDVTDDQIHFVINSVGVVEIMKTITDSKLEMTRQQSKFTQRNPIIDADDNVDEDGMVV.

GTP-binding positions include 12 to 13 (GT), 93 to 95 (GSG), and Asn165.

It belongs to the FtsZ family. PhuZ subfamily. As to quaternary structure, homomultimer. Polymerizes in a strictly GTP-dependent manner.

It is found in the host cytoplasm. The enzyme catalyses GTP + H2O = GDP + phosphate + H(+). Its activity is regulated as follows. The non-hydrolyzable GTP analog GMPCPP stabilizes filaments, which never disassemble. Its function is as follows. A tubulin-like GTPase that forms filaments, which are required for positioning viral DNA and capsids in the middle of the host cell for optimal replication. The motor component of a partition system which pushes phage DNA (encased by protein gp105) to the center of the bacterial host cell. Also required for movement of phage capsids to the vicinity of the viral DNA and rotation of the encased viral DNA at midcell. Forms filaments during the lytic phase, which position phage DNA at the center of the bacterial host cell. Filaments have a three-stranded intertwined achitecture and form a spindle-like cytoskeleton within the infected cell. Has GTPase activity. Filaments grow at the plus end and depolymerize at the minus end, a process called treadmilling, and switch from growing in a polar manner to catastrophic depolymerization, i.e. they display dynamic instability, like tubulin. In infected host cells the filament ends close to the cell pole are relatively stable, while the other end near the phage DNA is highly dynamic. Both capsid movement and DNA rotation probably require treadmilling. This is Phage tubulin-like protein from Pseudomonas phage 201phi2-1 (Pseudomonas chlororaphis phage 201phi2-1).